The sequence spans 199 residues: Putative DNA-directed RNA polymerase subunit L376 (199 aa).

This sequence belongs to the eukaryotic RPB7/RPC8 RNA polymerase subunit family.

It localises to the virion. It catalyses the reaction RNA(n) + a ribonucleoside 5'-triphosphate = RNA(n+1) + diphosphate. This Acanthamoeba polyphaga (Amoeba) protein is Putative DNA-directed RNA polymerase subunit L376.